The sequence spans 889 residues: MAERGRLGLPGAPGALNTPVPMNLFATWEVDGSSPSCVPRLCSLTLKKLVVFKELEKELISVVIAVKMQGSKRILRSHEIVLPPSGQVETDLALTFSLQYPHFLKREGNKLQIMLQRRKRYKNRTILGYKTLAAGSISMAEVMQHPSEGGQVLSLCSSIKEAPVKAAEIWIASLSSQPIDHEDSTMQAGPKAKSTDNYSEEEYESFSSEQEASDDAVQGQDLDEDDFDVGKPKKQRRSIVRTTSMTRQQNFKQKVVALLRRFKVSDEVLDSEQDPAEHIPEAEEDLDLLYDTLDMEHPSDSGPDMEDDDSVLSTPKPKLRPYFEGLSHSSSQTEIGSIHSARSHKEPPSPADVPEKTRSLGGRQPSDSVSDTVALGVPGPREHPGQPEDSPEAEASTLDVFTERLPPSGRITKTESLVIPSTRSEGKQAGRRGRSTSLKERQAARPQNERANSLDNERCPDARSQLQIPRKTVYDQLNHILISDDQLPENIILVNTSDWQGQFLSDVLQRHTLPVVCTCSPADVQAAFSTIVSRIQRYCNCNSQPPTPVKIAVAGAQHYLSAILRLFVEQLSHKTPDWLGYMRFLVIPLGSHPVARYLGSVDYRYNNFFQDLAWRDLFNKLEAQSAVQDTPDIVSRITQYIAGANCAHQLPIAEAMLTYKQKSPDEESSQKFIPFVGVVKVGIVEPSSATSGDSDDAAPSGSGTLSSTPPSASPAAKEASPTPPSSPSVSGGLSSPSQGVGAELMGLQVDYWTAAQPADRKRDAEKKDLPVTKNTLKCTFRSLQVSRLPSSGEAAATPTMSMTVVTKEKNKKVMFLPKKAKDKDVESKSQCIEGISRLICTARQQQNMLRVLIDGVECSDVKFFQLAAQWSSHVKHFPICIFGHSKATF.

Disordered regions lie at residues 180–246 (DHED…TSMT), 293–463 (LDME…PDAR), and 687–740 (SSAT…SQGV). The span at 343–358 (SHKEPPSPADVPEKTR) shows a compositional bias: basic and acidic residues. Phosphoserine is present on residues serine 390, serine 416, serine 453, serine 691, and serine 694. Composition is skewed to low complexity over residues 687-720 (SSATSGDSDDAAPSGSGTLSSTPPSASPAAKEAS) and 727-737 (PSVSGGLSSPS).

The protein belongs to the PACS family. As to quaternary structure, interacts with BID and PKD2. Interacts with SIRT1. Interacts with HDAC1. Interacts with TRPV1. Interacts with WDR37. In terms of assembly, (Microbial infection) Interacts with HIV-1 Nef. As to expression, broadly expressed, with greatest levels in skeletal muscle followed by heart, brain, pancreas and testis.

It localises to the endoplasmic reticulum. The protein resides in the mitochondrion. Its function is as follows. Multifunctional sorting protein that controls the endoplasmic reticulum (ER)-mitochondria communication, including the apposition of mitochondria with the ER and ER homeostasis. In addition, in response to apoptotic inducer, translocates BIB to mitochondria, which initiates a sequence of events including the formation of mitochondrial truncated BID, the release of cytochrome c, the activation of caspase-3 thereby causing cell death. May also be involved in ion channel trafficking, directing acidic cluster-containing ion channels to distinct subcellular compartments. This Homo sapiens (Human) protein is Phosphofurin acidic cluster sorting protein 2.